The primary structure comprises 348 residues: Phospho-2-dehydro-3-deoxyheptonate aldolase, Trp-sensitive (348 aa).

This sequence belongs to the class-I DAHP synthase family.

The catalysed reaction is D-erythrose 4-phosphate + phosphoenolpyruvate + H2O = 7-phospho-2-dehydro-3-deoxy-D-arabino-heptonate + phosphate. It participates in metabolic intermediate biosynthesis; chorismate biosynthesis; chorismate from D-erythrose 4-phosphate and phosphoenolpyruvate: step 1/7. In terms of biological role, stereospecific condensation of phosphoenolpyruvate (PEP) and D-erythrose-4-phosphate (E4P) giving rise to 3-deoxy-D-arabino-heptulosonate-7-phosphate (DAHP). This is Phospho-2-dehydro-3-deoxyheptonate aldolase, Trp-sensitive (aroH) from Buchnera aphidicola subsp. Baizongia pistaciae (strain Bp).